Here is a 245-residue protein sequence, read N- to C-terminus: Actin-like protein 10 (245 aa).

Belongs to the actin family.

This Homo sapiens (Human) protein is Actin-like protein 10 (ACTL10).